Here is a 662-residue protein sequence, read N- to C-terminus: Glycogen debranching enzyme (662 aa).

Aspartate 338 acts as the Nucleophile in catalysis. Residue glutamate 373 is the Proton donor of the active site.

This sequence belongs to the glycosyl hydrolase 13 family.

The catalysed reaction is Hydrolysis of (1-&gt;6)-alpha-D-glucosidic linkages to branches with degrees of polymerization of three or four glucose residues in limit dextrin.. It functions in the pathway glycan degradation; glycogen degradation. In terms of biological role, removes maltotriose and maltotetraose chains that are attached by 1,6-alpha-linkage to the limit dextrin main chain, generating a debranched limit dextrin. The polypeptide is Glycogen debranching enzyme (Yersinia pseudotuberculosis serotype I (strain IP32953)).